The chain runs to 389 residues: Phosphopentomutase (389 aa).

Residues aspartate 10, aspartate 282, histidine 287, aspartate 323, histidine 324, and histidine 335 each contribute to the Mn(2+) site.

This sequence belongs to the phosphopentomutase family. Mn(2+) serves as cofactor.

Its subcellular location is the cytoplasm. It carries out the reaction 2-deoxy-alpha-D-ribose 1-phosphate = 2-deoxy-D-ribose 5-phosphate. The enzyme catalyses alpha-D-ribose 1-phosphate = D-ribose 5-phosphate. It functions in the pathway carbohydrate degradation; 2-deoxy-D-ribose 1-phosphate degradation; D-glyceraldehyde 3-phosphate and acetaldehyde from 2-deoxy-alpha-D-ribose 1-phosphate: step 1/2. Isomerase that catalyzes the conversion of deoxy-ribose 1-phosphate (dRib-1-P) and ribose 1-phosphate (Rib-1-P) to deoxy-ribose 5-phosphate (dRib-5-P) and ribose 5-phosphate (Rib-5-P), respectively. This is Phosphopentomutase from Clostridium kluyveri (strain NBRC 12016).